The primary structure comprises 441 residues: Alpha-methylserine aldolase (441 aa).

The residue at position 256 (K256) is an N6-(pyridoxal phosphate)lysine.

The protein belongs to the SHMT family. Alpha-methylserine aldolase subfamily. In terms of assembly, homodimer. Requires pyridoxal 5'-phosphate as cofactor.

It catalyses the reaction 2-methyl-L-serine = formaldehyde + L-alanine. Catalyzes the reversible interconversion of alpha-methyl-L-serine to L-alanine and formaldehyde. This chain is Alpha-methylserine aldolase, found in Variovorax paradoxus.